Consider the following 258-residue polypeptide: Pimeloyl-[acyl-carrier protein] methyl ester esterase (258 aa).

In terms of domain architecture, AB hydrolase-1 spans 16 to 242 (LVLLHGWGLN…AAHAPFISHP (227 aa)). Residues Trp22, 82–83 (SM), and 143–147 (FLALQ) contribute to the substrate site. Ser82 serves as the catalytic Nucleophile. Catalysis depends on residues Asp207 and His235. Substrate is bound at residue His235.

It belongs to the AB hydrolase superfamily. Carboxylesterase BioH family. In terms of assembly, monomer.

Its subcellular location is the cytoplasm. The catalysed reaction is 6-carboxyhexanoyl-[ACP] methyl ester + H2O = 6-carboxyhexanoyl-[ACP] + methanol + H(+). Its pathway is cofactor biosynthesis; biotin biosynthesis. The physiological role of BioH is to remove the methyl group introduced by BioC when the pimeloyl moiety is complete. It allows to synthesize pimeloyl-ACP via the fatty acid synthetic pathway through the hydrolysis of the ester bonds of pimeloyl-ACP esters. The chain is Pimeloyl-[acyl-carrier protein] methyl ester esterase from Yersinia pseudotuberculosis serotype O:1b (strain IP 31758).